Reading from the N-terminus, the 353-residue chain is MKIDANKEKALNAVLGQIEKQFGKGSIMKLGENRSMDVETISTGSLSLDIALGAGGLPMGRIVEIYGPESSGKTTLTLEVIAAAQREGKVCAFIDAEHALDPIYAKKLGVDIDNLLCSQPDTGEQALEICDALTRSGAVDVIVVDSVAALTPKAEIEGEIGDSHMGLAARMMSQAMRKLAGNLKQTNTMLIFINQIRMKIGVMFGNPETTTGGNALKFYASVRLDIRRTGAIKDRDEVIGNETRVKVVKNKIAAPFKQAEFQILYGQGINSTGELVDLGVAHKLVEKAGAWYSYKGDKIGQGRANAGKYLIENPAVAQEIDVALRALLLTPAAPVADSATGDENIDLETGEVF.

Position 67-74 (67-74) interacts with ATP; that stretch reads GPESSGKT.

This sequence belongs to the RecA family.

It is found in the cytoplasm. Functionally, can catalyze the hydrolysis of ATP in the presence of single-stranded DNA, the ATP-dependent uptake of single-stranded DNA by duplex DNA, and the ATP-dependent hybridization of homologous single-stranded DNAs. It interacts with LexA causing its activation and leading to its autocatalytic cleavage. The protein is Protein RecA of Shewanella sediminis (strain HAW-EB3).